A 133-amino-acid polypeptide reads, in one-letter code: Putative elongation factor 1-delta-like protein (133 aa).

The span at Ser-58–Gly-73 shows a compositional bias: low complexity. 2 disordered regions span residues Ser-58–Glu-77 and Asn-89–Gly-133. Residues Asn-89–Ala-102 show a composition bias toward basic and acidic residues.

It belongs to the EF-1-beta/EF-1-delta family.

The sequence is that of Putative elongation factor 1-delta-like protein (EEF1DP3) from Homo sapiens (Human).